The chain runs to 178 residues: ATP synthase subunit delta (178 aa).

Belongs to the ATPase delta chain family. As to quaternary structure, F-type ATPases have 2 components, F(1) - the catalytic core - and F(0) - the membrane proton channel. F(1) has five subunits: alpha(3), beta(3), gamma(1), delta(1), epsilon(1). F(0) has three main subunits: a(1), b(2) and c(10-14). The alpha and beta chains form an alternating ring which encloses part of the gamma chain. F(1) is attached to F(0) by a central stalk formed by the gamma and epsilon chains, while a peripheral stalk is formed by the delta and b chains.

The protein localises to the cell inner membrane. Its function is as follows. F(1)F(0) ATP synthase produces ATP from ADP in the presence of a proton or sodium gradient. F-type ATPases consist of two structural domains, F(1) containing the extramembraneous catalytic core and F(0) containing the membrane proton channel, linked together by a central stalk and a peripheral stalk. During catalysis, ATP synthesis in the catalytic domain of F(1) is coupled via a rotary mechanism of the central stalk subunits to proton translocation. Functionally, this protein is part of the stalk that links CF(0) to CF(1). It either transmits conformational changes from CF(0) to CF(1) or is implicated in proton conduction. The sequence is that of ATP synthase subunit delta from Stutzerimonas stutzeri (strain A1501) (Pseudomonas stutzeri).